We begin with the raw amino-acid sequence, 162 residues long: Ribosome maturation factor RimP (162 aa).

The protein belongs to the RimP family.

It localises to the cytoplasm. Functionally, required for maturation of 30S ribosomal subunits. The sequence is that of Ribosome maturation factor RimP from Cupriavidus metallidurans (strain ATCC 43123 / DSM 2839 / NBRC 102507 / CH34) (Ralstonia metallidurans).